The chain runs to 359 residues: Peptide chain release factor 1 (359 aa).

Glutamine 235 is modified (N5-methylglutamine). Residues alanine 287–phenylalanine 312 are disordered.

This sequence belongs to the prokaryotic/mitochondrial release factor family. In terms of processing, methylated by PrmC. Methylation increases the termination efficiency of RF1.

It localises to the cytoplasm. Peptide chain release factor 1 directs the termination of translation in response to the peptide chain termination codons UAG and UAA. The protein is Peptide chain release factor 1 of Chlamydia trachomatis serovar A (strain ATCC VR-571B / DSM 19440 / HAR-13).